Reading from the N-terminus, the 700-residue chain is MARQTPIERYRNIGISAHIDAGKTTTTERILYYTGVNHKIGEVHDGAATMDWMEQEQERGITITSAATTCFWKGMDRSLPEHRFNIIDTPGHVDFTIEVERSMRVLDGACMVYCAVGGVQPQSETVWRQANKYKVPRLAFVNKMDRTGANFFKVVDQMKTRLRANPVPVVVPIGAEDSFTGVVDLLKMKAIIWDEASQGMKFSYEDIPAGLEGVAQEWREKMVEAAAEASEELMNKYLETGDLTEDEIKLALRTRTIACEIQPMLCGTAFKNKGVQRMLDAVIDYLPSPVDIPPVTGTDDDDQPISRRADDKEKFSALAFKLMTDPFVGQLTFVRVYSGVLQSGSSVYNPIRGKKERIGRILQMHANQREEIKEILAGDIAACVGLKEVTTGETLCDIDSPITLVKMIFPEPVISQAVEPKTKADQEKMGIALGRLAAEDPSFRVRTDEESGQTIISGMGELHLEIIVDRMKREFGVEANVGKPQVAYRETIRDLVKDVEGKFVRQSGGKGQYGHVVLTVEPQEPGAGFQFVDAIKGGVVPREFIPAVEKGLIDTLPNGVLAGFPVVDVKVTLTFGSYHEVDSNENAFKMAASMGFKDGMRKAKPVILEPMMAVEVETPEDYAGTVMGDLSSRRGMVQGMDDMVGGGKVIKAEVPLSEMFGYSTSLRSATQGRATYTMEFKHYSEAPKNVADAIITARGK.

The tr-type G domain maps to 8–290 (ERYRNIGISA…AVIDYLPSPV (283 aa)). Residues 17 to 24 (AHIDAGKT), 88 to 92 (DTPGH), and 142 to 145 (NKMD) each bind GTP.

It belongs to the TRAFAC class translation factor GTPase superfamily. Classic translation factor GTPase family. EF-G/EF-2 subfamily.

Its subcellular location is the cytoplasm. In terms of biological role, catalyzes the GTP-dependent ribosomal translocation step during translation elongation. During this step, the ribosome changes from the pre-translocational (PRE) to the post-translocational (POST) state as the newly formed A-site-bound peptidyl-tRNA and P-site-bound deacylated tRNA move to the P and E sites, respectively. Catalyzes the coordinated movement of the two tRNA molecules, the mRNA and conformational changes in the ribosome. In Leptothrix cholodnii (strain ATCC 51168 / LMG 8142 / SP-6) (Leptothrix discophora (strain SP-6)), this protein is Elongation factor G.